The chain runs to 195 residues: Mannitol operon repressor (195 aa).

Belongs to the MtlR/FumE family. As to quaternary structure, homodimer. Can also form higher level multimer aggregates.

Its function is as follows. Involved in the repression of the expression of the mannitol mtlADR operon. Does not bind the operator/promoter regulatory region of this operon. Therefore, seems to belong to a new class of transcription factors in bacteria that may regulate gene expression indirectly, perhaps as a part of a larger transcriptional complex. In Escherichia coli O6:H1 (strain CFT073 / ATCC 700928 / UPEC), this protein is Mannitol operon repressor.